Here is a 200-residue protein sequence, read N- to C-terminus: Probable E3 ubiquitin-protein ligase ATL45 (200 aa).

Residues 26 to 46 (MVVILSALLCALVCVAGLAAV) traverse the membrane as a helical segment. Residues 113-155 (CAICITEFSEGEEIRILPLCSHAFHVACIDKWLTSRSSCPSCR) form an RING-type; atypical zinc finger.

The protein belongs to the RING-type zinc finger family. ATL subfamily. In terms of assembly, interacts with BIK1.

Its subcellular location is the membrane. The enzyme catalyses S-ubiquitinyl-[E2 ubiquitin-conjugating enzyme]-L-cysteine + [acceptor protein]-L-lysine = [E2 ubiquitin-conjugating enzyme]-L-cysteine + N(6)-ubiquitinyl-[acceptor protein]-L-lysine.. Its pathway is protein modification; protein ubiquitination. In terms of biological role, E3 ubiquitin-protein ligase that possess E3 ubiquitin ligase activity in vitro and mediates protein monoubiquitination. Triggers the monoubiquitination of phosphorylated BIK1 in response to pathogen-associated molecular pattern (PAMP) detection. May be involved in the early steps of the plant defense signaling pathway. This chain is Probable E3 ubiquitin-protein ligase ATL45, found in Arabidopsis thaliana (Mouse-ear cress).